The primary structure comprises 276 residues: 2-dehydro-3-deoxyphosphooctonate aldolase (276 aa).

Belongs to the KdsA family.

Its subcellular location is the cytoplasm. The catalysed reaction is D-arabinose 5-phosphate + phosphoenolpyruvate + H2O = 3-deoxy-alpha-D-manno-2-octulosonate-8-phosphate + phosphate. It functions in the pathway carbohydrate biosynthesis; 3-deoxy-D-manno-octulosonate biosynthesis; 3-deoxy-D-manno-octulosonate from D-ribulose 5-phosphate: step 2/3. It participates in bacterial outer membrane biogenesis; lipopolysaccharide biosynthesis. The sequence is that of 2-dehydro-3-deoxyphosphooctonate aldolase from Xanthomonas euvesicatoria pv. vesicatoria (strain 85-10) (Xanthomonas campestris pv. vesicatoria).